The sequence spans 218 residues: Phosphoenolpyruvate guanylyltransferase (218 aa).

Residues Thr151, Gly166, and Ser169 each contribute to the phosphoenolpyruvate site.

Belongs to the CofC family.

The enzyme catalyses phosphoenolpyruvate + GTP + H(+) = enolpyruvoyl-2-diphospho-5'-guanosine + diphosphate. It functions in the pathway cofactor biosynthesis; coenzyme F420 biosynthesis. In terms of biological role, guanylyltransferase that catalyzes the activation of phosphoenolpyruvate (PEP) as enolpyruvoyl-2-diphospho-5'-guanosine, via the condensation of PEP with GTP. It is involved in the biosynthesis of coenzyme F420, a hydride carrier cofactor. This is Phosphoenolpyruvate guanylyltransferase from Mycobacterium sp. (strain KMS).